A 500-amino-acid chain; its full sequence is Carnosic acid synthase (500 aa).

The helical transmembrane segment at 4–24 (LILLSLAFLASCVVAYSRRRP) threads the bilayer. Cys443 is a binding site for heme.

It belongs to the cytochrome P450 family. Heme serves as cofactor. Expressed in leaf glandular trichomes.

It is found in the membrane. The catalysed reaction is 11-hydroxyferruginol + 3 reduced [NADPH--hemoprotein reductase] + 3 O2 = carnosate + 3 oxidized [NADPH--hemoprotein reductase] + 4 H2O + 4 H(+). The enzyme catalyses miltiradiene + 2 reduced [NADPH--hemoprotein reductase] + 2 O2 = miltiradien-20-al + 2 oxidized [NADPH--hemoprotein reductase] + 3 H2O + 2 H(+). It carries out the reaction ferruginol + 3 reduced [NADPH--hemoprotein reductase] + 3 O2 = pisiferate + 3 oxidized [NADPH--hemoprotein reductase] + 4 H2O + 4 H(+). It functions in the pathway secondary metabolite biosynthesis; terpenoid biosynthesis. Its function is as follows. Monooxygenase involved in the biosynthesis of carnosate, a potent antioxidant labdane-related diterpene natural product. Catalyzes the oxidation of 11-hydroxyferruginol to produce carnosate. Mediates the conversion of miltiradien into miltiradien-20-al. Also involved in the production of pisiferic acid and derivative products from ferruginol. The chain is Carnosic acid synthase from Salvia pomifera (Apple sage).